Here is a 317-residue protein sequence, read N- to C-terminus: Transaldolase (317 aa).

The Schiff-base intermediate with substrate role is filled by K132.

It belongs to the transaldolase family. Type 1 subfamily. In terms of assembly, homodimer.

The protein localises to the cytoplasm. It catalyses the reaction D-sedoheptulose 7-phosphate + D-glyceraldehyde 3-phosphate = D-erythrose 4-phosphate + beta-D-fructose 6-phosphate. Its pathway is carbohydrate degradation; pentose phosphate pathway; D-glyceraldehyde 3-phosphate and beta-D-fructose 6-phosphate from D-ribose 5-phosphate and D-xylulose 5-phosphate (non-oxidative stage): step 2/3. Its function is as follows. Transaldolase is important for the balance of metabolites in the pentose-phosphate pathway. The chain is Transaldolase from Histophilus somni (strain 2336) (Haemophilus somnus).